The primary structure comprises 665 residues: Secreted LysM effector Lys3 (665 aa).

The first 19 residues, 1 to 19 (MLWLTVSLTGFALLGVVAA), serve as a signal peptide directing secretion. Asn43 and Asn153 each carry an N-linked (GlcNAc...) asparagine glycan. LysM domains lie at 166–211 (RTYT…TLCL), 216–264 (TLRK…YICI), and 303–349 (KWYV…AYCV). N-linked (GlcNAc...) asparagine glycosylation occurs at Asn234. The N-linked (GlcNAc...) asparagine glycan is linked to Asn398. The region spanning 409-454 (SWSDAAKLNSCSFIAHINGVTVSQLLQWNPSLSKDSCSLSRELYYC) is the LysM 4 domain. Asn531 carries N-linked (GlcNAc...) asparagine glycosylation. A disordered region spans residues 585-610 (SSVSMTNSAPATATSTGGPPAPTQDG). Over residues 592–602 (SAPATATSTGG) the composition is skewed to low complexity. The N-linked (GlcNAc...) asparagine glycan is linked to Asn614. Residues 617 to 663 (KWHVVESGDGCWAIYTKYGITSDQLFEWNTKISKDCSNIWLGYAVCV) enclose the LysM 5 domain.

Belongs to the secreted LysM effector family.

Might have a role in sequestration of chitin oligosaccharides (breakdown products of fungal cell walls that are released during invasion and act as triggers of host immunity) to dampen host defense. The polypeptide is Secreted LysM effector Lys3 (Pochonia chlamydosporia (strain 123) (Metacordyceps chlamydosporia)).